A 248-amino-acid polypeptide reads, in one-letter code: 5'-nucleotidase SurE (248 aa).

A divalent metal cation-binding residues include Asp-8, Asp-9, Ser-39, and Asn-91.

The protein belongs to the SurE nucleotidase family. Requires a divalent metal cation as cofactor.

The protein resides in the cytoplasm. The catalysed reaction is a ribonucleoside 5'-phosphate + H2O = a ribonucleoside + phosphate. In terms of biological role, nucleotidase that shows phosphatase activity on nucleoside 5'-monophosphates. The polypeptide is 5'-nucleotidase SurE (Geobacter sp. (strain M21)).